Reading from the N-terminus, the 363-residue chain is Probable F-box protein At4g22165 (363 aa).

One can recognise an F-box domain in the interval 7-56; the sequence is PNTWSELPLDLLNLVFKRLSLVNFQRAKSVCSTRYSVSRQCVPERQIALL.

The polypeptide is Probable F-box protein At4g22165 (Arabidopsis thaliana (Mouse-ear cress)).